Consider the following 511-residue polypeptide: Phosphoenolpyruvate carboxylase (511 aa).

Belongs to the PEPCase type 2 family. In terms of assembly, homotetramer. Mg(2+) serves as cofactor.

The catalysed reaction is oxaloacetate + phosphate = phosphoenolpyruvate + hydrogencarbonate. Allosterically inhibited by L-aspartate and L-malate. PEPC activity is not affected by allosteric activators of E.coli PEPC such as glucose 6-phosphate, fructose 1,6-bisphosphate, and acetyl coenzyme A. Catalyzes the irreversible beta-carboxylation of phosphoenolpyruvate (PEP) to form oxaloacetate (OAA), a four-carbon dicarboxylic acid source for the tricarboxylic acid cycle. This is Phosphoenolpyruvate carboxylase from Saccharolobus solfataricus (strain ATCC 35092 / DSM 1617 / JCM 11322 / P2) (Sulfolobus solfataricus).